The primary structure comprises 296 residues: Cytochrome bc1 complex cytochrome c subunit (296 aa).

The span at 1-19 shows a compositional bias: polar residues; the sequence is MMETNPQTSEGAGKAQSSA. A disordered region spans residues 1 to 27; the sequence is MMETNPQTSEGAGKAQSSAKKVKNRRK. A helical membrane pass occupies residues 32–52; the sequence is VAGAMALTIGLSGAGILATAI. 2 consecutive Cytochrome c domains span residues 67-147 and 177-255; these read ALIA…AANG and LDVS…KSTK. Residues C80, C83, H84, C190, C193, and H194 each coordinate heme c. The chain crosses the membrane as a helical span at residues 274-294; that stretch reads GLFMWGIGIMVLIAAAMWIGS.

In terms of assembly, the cytochrome bc1 complex is composed of a cytochrome b (QcrB), the Rieske iron-sulfur protein (QcrA) and a diheme cytochrome c (QcrC) subunit. The bc1 complex forms a supercomplex with cytochrome c oxidase (cytochrome aa3). Binds 2 heme c groups covalently per subunit.

It localises to the cell membrane. The catalysed reaction is a quinol + 2 Fe(III)-[cytochrome c](out) = a quinone + 2 Fe(II)-[cytochrome c](out) + 2 H(+)(out). In terms of biological role, cytochrome c1 subunit of the cytochrome bc1 complex, an essential component of the respiratory electron transport chain required for ATP synthesis. The bc1 complex catalyzes the oxidation of menaquinol and the reduction of cytochrome c in the respiratory chain. The bc1 complex operates through a Q-cycle mechanism that couples electron transfer to generation of the proton gradient that drives ATP synthesis. The protein is Cytochrome bc1 complex cytochrome c subunit (qcrC) of Corynebacterium efficiens (strain DSM 44549 / YS-314 / AJ 12310 / JCM 11189 / NBRC 100395).